We begin with the raw amino-acid sequence, 374 residues long: Organelle RRM domain-containing protein 1, chloroplastic (374 aa).

A chloroplast-targeting transit peptide spans 1 to 54 (MEALIASTSFFVPISNSSSSHIINNRFFPSFYSPNLNFGTFRKTSLSSSHLVFS). Positions 258-271 (KDYEGDSTQDSRDQ) are enriched in basic and acidic residues. The tract at residues 258-279 (KDYEGDSTQDSRDQDDSESPPV) is disordered. The RRM domain maps to 282-360 (KKLFITGLSF…WMIVVDVAKT (79 aa)).

As to quaternary structure, interacts with PCMP-H51/CRR28 and PCMP-H12/OTP82. Interacts with MORF8/RIP1, MORF2/RIP2 and VAR3/OZ1.

The protein resides in the plastid. Its subcellular location is the chloroplast. Involved in C-to-U editing of chloroplastic RNA. Functions as major chloroplastic editing factor. Controls 62 percent of the chloroplastic editing sites. Binds RNA close to ORRM1-dependent editing sites in vitro. Binds the editing recognition trans-factors PCMP-H51/CRR28 and PCMP-H12/OTP82. In Arabidopsis thaliana (Mouse-ear cress), this protein is Organelle RRM domain-containing protein 1, chloroplastic.